We begin with the raw amino-acid sequence, 130 residues long: Small ribosomal subunit protein uS8 (130 aa).

Belongs to the universal ribosomal protein uS8 family. In terms of assembly, part of the 30S ribosomal subunit. Contacts proteins S5 and S12.

In terms of biological role, one of the primary rRNA binding proteins, it binds directly to 16S rRNA central domain where it helps coordinate assembly of the platform of the 30S subunit. This chain is Small ribosomal subunit protein uS8, found in Pseudoalteromonas translucida (strain TAC 125).